Reading from the N-terminus, the 602-residue chain is Potassium voltage-gated channel subfamily A member 5 (602 aa).

The tract at residues 1–202 is tetramerization domain; the sequence is MEISLVPLEN…FYQLGDEAME (202 aa). Over 1-238 the chain is Cytoplasmic; the sequence is MEISLVPLEN…LIFEYPESSG (238 aa). Positions 58 to 107 are disordered; the sequence is EDANQGGRPLPPMAQELPQPRRLSAEDEEGEGDPGLGTVEEDQAPQDAGS. Ser-81 carries the phosphoserine; by CK2 and PKA modification. Lys-212 participates in a covalent cross-link: Glycyl lysine isopeptide (Lys-Gly) (interchain with G-Cter in SUMO). Residues 239–260 form a helical membrane-spanning segment; it reads SARAIAIVSVLVILISIITFCL. Topologically, residues 261-314 are extracellular; sequence ETLPEFRDERELLRHPPVPPQPPAPAPGINGSVSGALSSGPTVAPLLPRTLADP. The chain crosses the membrane as a helical span at residues 315–336; the sequence is FFIVETTCVIWFTFELLVRFFA. Residue Cys-337 is the site of S-palmitoyl cysteine attachment. At 337 to 347 the chain is on the cytoplasmic side; it reads CPSKAEFSRNI. Residues 348–368 traverse the membrane as a helical segment; it reads MNIIDVVAIFPYFITLGTELA. At 369–384 the chain is on the extracellular side; sequence EQQPGGGGQNGQQAMS. Residues 385–405 form a helical; Voltage-sensor membrane-spanning segment; the sequence is LAILRVIRLVRVFRIFKLSRH. Residues 406–420 lie on the Cytoplasmic side of the membrane; sequence SKGLQILGKTLQASM. The tract at residues 407–420 is S4-S5 linker; the sequence is KGLQILGKTLQASM. Residues 421–442 form a helical membrane-spanning segment; the sequence is RELGLLIFFLFIGVILFSSAVY. The Extracellular portion of the chain corresponds to 443-456; that stretch reads FAEADNHGSHFSSI. The segment at residues 457–468 is an intramembrane region (helical); that stretch reads PDAFWWAVVTMT. The short motif at 469-474 is the Selectivity filter element; that stretch reads TVGYGD. Residues 469 to 476 lie within the membrane without spanning it; the sequence is TVGYGDMR. Over 477-483 the chain is Extracellular; that stretch reads PITVGGK. The chain crosses the membrane as a helical span at residues 484 to 512; the sequence is IVGSLCAIAGVLTIALPVPVIVSNFNYFY. Residues 513-602 lie on the Cytoplasmic side of the membrane; sequence HRETDHEEQA…CLDTSRETDL (90 aa). Residues 523–536 show a composition bias toward basic and acidic residues; that stretch reads ALKEEQGNQRRESG. Residues 523-543 form a disordered region; it reads ALKEEQGNQRRESGLDTGGQR. Lys-525 is covalently cross-linked (Glycyl lysine isopeptide (Lys-Gly) (interchain with G-Cter in SUMO)). 3 positions are modified to phosphoserine; by PKA: Ser-535, Ser-546, and Ser-569. The short motif at 600–602 is the PDZ-binding element; that stretch reads TDL.

The protein belongs to the potassium channel family. A (Shaker) (TC 1.A.1.2) subfamily. Kv1.5/KCNA5 sub-subfamily. As to quaternary structure, homotetramer and heterotetramer of potassium channel proteins. Interacts with DLG1, which enhances channel currents. Forms a ternary complex with DLG1 and CAV3. Interacts with KCNAB1. Interacts with UBE2I. Interacts with XIRP2; the interaction is required for normal action potential configuration in the heart. In terms of processing, glycosylated. Sumoylated on Lys-212, and Lys-525, preferentially with SUMO3. Sumoylation regulates the voltage sensitivity of the channel. As to expression, expressed equally in atrium, ventricle, aorta and skeletal muscle. Weaker expression in brain.

It is found in the cell membrane. The enzyme catalyses K(+)(in) = K(+)(out). Voltage-gated potassium channel that mediates transmembrane potassium transport in excitable membranes. Forms tetrameric potassium-selective channels through which potassium ions pass in accordance with their electrochemical gradient. The channel alternates between opened and closed conformations in response to the voltage difference across the membrane. Can form functional homotetrameric channels and heterotetrameric channels that contain variable proportions of KCNA1, KCNA2, KCNA4, KCNA5, and possibly other family members as well; channel properties depend on the type of alpha subunits that are part of the channel. Channel properties are modulated by cytoplasmic beta subunits that regulate the subcellular location of the alpha subunits and promote rapid inactivation. Homotetrameric channels display rapid activation and slow inactivation. Required for normal electrical conduction including formation of the infranodal ventricular conduction system and normal action potential configuration, as a result of its interaction with XIRP2. May play a role in regulating the secretion of insulin in normal pancreatic islets. The protein is Potassium voltage-gated channel subfamily A member 5 (Kcna5) of Rattus norvegicus (Rat).